Here is a 313-residue protein sequence, read N- to C-terminus: GTPase Era (313 aa).

Positions 13–186 (RSGFVSFVGR…ADLLVGLLPE (174 aa)) constitute an Era-type G domain. The tract at residues 21 to 28 (GRPNAGKS) is G1. 21–28 (GRPNAGKS) contributes to the GTP binding site. Positions 47-51 (QTTRT) are G2. Residues 68 to 71 (DTPG) form a G3 region. Residues 68-72 (DTPGL) and 131-134 (TKTD) each bind GTP. A G4 region spans residues 131-134 (TKTD). The interval 165 to 167 (VSA) is G5. Residues 217-299 (LRDELPHSVA…YLDLHVKIAK (83 aa)) enclose the KH type-2 domain.

It belongs to the TRAFAC class TrmE-Era-EngA-EngB-Septin-like GTPase superfamily. Era GTPase family. In terms of assembly, monomer.

It is found in the cytoplasm. The protein localises to the cell membrane. Functionally, an essential GTPase that binds both GDP and GTP, with rapid nucleotide exchange. Plays a role in 16S rRNA processing and 30S ribosomal subunit biogenesis and possibly also in cell cycle regulation and energy metabolism. This is GTPase Era from Nocardioides sp. (strain ATCC BAA-499 / JS614).